The sequence spans 447 residues: Phosphoglucosamine mutase (447 aa).

Catalysis depends on serine 102, which acts as the Phosphoserine intermediate. Positions 102, 241, 243, and 245 each coordinate Mg(2+). Serine 102 carries the post-translational modification Phosphoserine.

Belongs to the phosphohexose mutase family. Mg(2+) serves as cofactor. Activated by phosphorylation.

The catalysed reaction is alpha-D-glucosamine 1-phosphate = D-glucosamine 6-phosphate. Its function is as follows. Catalyzes the conversion of glucosamine-6-phosphate to glucosamine-1-phosphate. The chain is Phosphoglucosamine mutase from Delftia acidovorans (strain DSM 14801 / SPH-1).